The primary structure comprises 495 residues: Glutamate--tRNA ligase (495 aa).

Residues 12 to 22 (PSPTGHLHIGN) carry the 'HIGH' region motif. Residues 259 to 263 (KLSKR) carry the 'KMSKS' region motif. Lys262 contacts ATP.

It belongs to the class-I aminoacyl-tRNA synthetase family. Glutamate--tRNA ligase type 1 subfamily. As to quaternary structure, monomer.

It localises to the cytoplasm. The catalysed reaction is tRNA(Glu) + L-glutamate + ATP = L-glutamyl-tRNA(Glu) + AMP + diphosphate. Catalyzes the attachment of glutamate to tRNA(Glu) in a two-step reaction: glutamate is first activated by ATP to form Glu-AMP and then transferred to the acceptor end of tRNA(Glu). This chain is Glutamate--tRNA ligase, found in Ligilactobacillus salivarius (strain UCC118) (Lactobacillus salivarius).